Consider the following 199-residue polypeptide: Cytochrome c oxidase subunit 2 (199 aa).

The chain crosses the membrane as a helical span at residues 1 to 13 (AICSLVLYLLSLM). Over 14–26 (LMEKLSSNTVDAQ) the chain is Mitochondrial matrix. Residues 27 to 54 (EVELIWTILPAIVLILLALPSLQILYMM) traverse the membrane as a helical segment. The Mitochondrial intermembrane segment spans residues 55–199 (DEIDEPDLTL…SSLLSSSSSL (145 aa)). Residues H128, C163, E165, C167, H171, and M174 each coordinate Cu cation. E165 contributes to the Mg(2+) binding site.

This sequence belongs to the cytochrome c oxidase subunit 2 family. In terms of assembly, component of the cytochrome c oxidase (complex IV, CIV), a multisubunit enzyme composed of 14 subunits. The complex is composed of a catalytic core of 3 subunits MT-CO1, MT-CO2 and MT-CO3, encoded in the mitochondrial DNA, and 11 supernumerary subunits COX4I, COX5A, COX5B, COX6A, COX6B, COX6C, COX7A, COX7B, COX7C, COX8 and NDUFA4, which are encoded in the nuclear genome. The complex exists as a monomer or a dimer and forms supercomplexes (SCs) in the inner mitochondrial membrane with NADH-ubiquinone oxidoreductase (complex I, CI) and ubiquinol-cytochrome c oxidoreductase (cytochrome b-c1 complex, complex III, CIII), resulting in different assemblies (supercomplex SCI(1)III(2)IV(1) and megacomplex MCI(2)III(2)IV(2)). Found in a complex with TMEM177, COA6, COX18, COX20, SCO1 and SCO2. Interacts with TMEM177 in a COX20-dependent manner. Interacts with COX20. Interacts with COX16. Cu cation serves as cofactor.

The protein localises to the mitochondrion inner membrane. The enzyme catalyses 4 Fe(II)-[cytochrome c] + O2 + 8 H(+)(in) = 4 Fe(III)-[cytochrome c] + 2 H2O + 4 H(+)(out). Its function is as follows. Component of the cytochrome c oxidase, the last enzyme in the mitochondrial electron transport chain which drives oxidative phosphorylation. The respiratory chain contains 3 multisubunit complexes succinate dehydrogenase (complex II, CII), ubiquinol-cytochrome c oxidoreductase (cytochrome b-c1 complex, complex III, CIII) and cytochrome c oxidase (complex IV, CIV), that cooperate to transfer electrons derived from NADH and succinate to molecular oxygen, creating an electrochemical gradient over the inner membrane that drives transmembrane transport and the ATP synthase. Cytochrome c oxidase is the component of the respiratory chain that catalyzes the reduction of oxygen to water. Electrons originating from reduced cytochrome c in the intermembrane space (IMS) are transferred via the dinuclear copper A center (CU(A)) of subunit 2 and heme A of subunit 1 to the active site in subunit 1, a binuclear center (BNC) formed by heme A3 and copper B (CU(B)). The BNC reduces molecular oxygen to 2 water molecules using 4 electrons from cytochrome c in the IMS and 4 protons from the mitochondrial matrix. This is Cytochrome c oxidase subunit 2 (MT-CO2) from Rhea americana (Greater rhea).